A 431-amino-acid polypeptide reads, in one-letter code: 5-methylthioadenosine/S-adenosylhomocysteine deaminase (431 aa).

Positions 66 and 68 each coordinate Zn(2+). Positions 95, 147, and 185 each coordinate substrate. Residue histidine 212 coordinates Zn(2+). Positions 215 and 300 each coordinate substrate. Aspartate 300 is a Zn(2+) binding site.

The protein belongs to the metallo-dependent hydrolases superfamily. MTA/SAH deaminase family. Zn(2+) serves as cofactor.

The enzyme catalyses S-adenosyl-L-homocysteine + H2O + H(+) = S-inosyl-L-homocysteine + NH4(+). The catalysed reaction is S-methyl-5'-thioadenosine + H2O + H(+) = S-methyl-5'-thioinosine + NH4(+). Functionally, catalyzes the deamination of 5-methylthioadenosine and S-adenosyl-L-homocysteine into 5-methylthioinosine and S-inosyl-L-homocysteine, respectively. Is also able to deaminate adenosine. The protein is 5-methylthioadenosine/S-adenosylhomocysteine deaminase of Desulfitobacterium hafniense (strain Y51).